We begin with the raw amino-acid sequence, 503 residues long: Annexin A11 (503 aa).

Pro residues-rich tracts occupy residues 1-17, 80-145, and 155-169; these read MSYP…PPAP, GYPP…PYPG, and SPVP…PSYP. Disordered stretches follow at residues 1–35 and 56–178; these read MSYP…MPPI and AANM…GTVT. 4 Annexin repeats span residues 198 to 269, 270 to 341, 353 to 425, and 429 to 500; these read FDPL…ALMK, TPIL…SLSQ, SLVQ…AVVK, and NTPA…KICG. N6-acetyllysine is present on residues Lys246 and Lys253. At Lys477 the chain carries N6-acetyllysine.

The protein belongs to the annexin family. As to quaternary structure, interacts with PDCD6 in a calcium-dependent manner. Interacts with KIF23 during cytokinesis. Interacts with S100A6.

Its subcellular location is the cytoplasm. It localises to the melanosome. The protein resides in the nucleus envelope. The protein localises to the nucleus. It is found in the nucleoplasm. Its subcellular location is the cytoskeleton. It localises to the spindle. Its function is as follows. Required for midbody formation and completion of the terminal phase of cytokinesis. Binds specifically to calcyclin in a calcium-dependent manner. The sequence is that of Annexin A11 (ANXA11) from Oryctolagus cuniculus (Rabbit).